The following is a 322-amino-acid chain: Cytochrome f (322 aa).

Positions 1 to 35 (MQNRNIFSWVKEQTTRSISVSIMILIYVITWTSIS) are cleaved as a signal peptide. 4 residues coordinate heme: tyrosine 38, cysteine 58, cysteine 61, and histidine 62. A helical transmembrane segment spans residues 288-308 (VQGLFFFFASVILAQIFLVLK).

It belongs to the cytochrome f family. The 4 large subunits of the cytochrome b6-f complex are cytochrome b6, subunit IV (17 kDa polypeptide, petD), cytochrome f and the Rieske protein, while the 4 small subunits are PetG, PetL, PetM and PetN. The complex functions as a dimer. Heme serves as cofactor.

It is found in the plastid. The protein resides in the chloroplast thylakoid membrane. In terms of biological role, component of the cytochrome b6-f complex, which mediates electron transfer between photosystem II (PSII) and photosystem I (PSI), cyclic electron flow around PSI, and state transitions. The polypeptide is Cytochrome f (Nandina domestica (Heavenly bamboo)).